The following is a 136-amino-acid chain: Beta-hordothionin (136 aa).

Residues 1–27 (MGSKGLKGVMVCLLILGLVLEHVQVEG) form the signal peptide. Cystine bridges form between cysteine 30–cysteine 66, cysteine 31–cysteine 58, cysteine 39–cysteine 56, and cysteine 43–cysteine 52. Residues 73–136 (LALVSNSDEP…GDVGLTSLTA (64 aa)) constitute a propeptide, acidic domain.

The protein belongs to the plant thionin (TC 1.C.44) family. 4 C-C subfamily. In terms of assembly, homodimer.

It is found in the secreted. In terms of biological role, thionins are small plant proteins which are toxic to animal cells. They seem to exert their toxic effect at the level of the cell membrane. Their precise function is not known. The polypeptide is Beta-hordothionin (THI1.2) (Hordeum vulgare (Barley)).